Here is a 127-residue protein sequence, read N- to C-terminus: Ribosome-binding factor A (127 aa).

The protein belongs to the RbfA family. As to quaternary structure, monomer. Binds 30S ribosomal subunits, but not 50S ribosomal subunits or 70S ribosomes.

The protein localises to the cytoplasm. In terms of biological role, one of several proteins that assist in the late maturation steps of the functional core of the 30S ribosomal subunit. Associates with free 30S ribosomal subunits (but not with 30S subunits that are part of 70S ribosomes or polysomes). Required for efficient processing of 16S rRNA. May interact with the 5'-terminal helix region of 16S rRNA. The protein is Ribosome-binding factor A of Geobacillus kaustophilus (strain HTA426).